Here is a 352-residue protein sequence, read N- to C-terminus: UDP-3-O-acylglucosamine N-acyltransferase (352 aa).

The Proton acceptor role is filled by H257.

The protein belongs to the transferase hexapeptide repeat family. LpxD subfamily. As to quaternary structure, homotrimer.

The enzyme catalyses a UDP-3-O-[(3R)-3-hydroxyacyl]-alpha-D-glucosamine + a (3R)-hydroxyacyl-[ACP] = a UDP-2-N,3-O-bis[(3R)-3-hydroxyacyl]-alpha-D-glucosamine + holo-[ACP] + H(+). Its pathway is bacterial outer membrane biogenesis; LPS lipid A biosynthesis. In terms of biological role, catalyzes the N-acylation of UDP-3-O-acylglucosamine using 3-hydroxyacyl-ACP as the acyl donor. Is involved in the biosynthesis of lipid A, a phosphorylated glycolipid that anchors the lipopolysaccharide to the outer membrane of the cell. This is UDP-3-O-acylglucosamine N-acyltransferase from Methylobacterium nodulans (strain LMG 21967 / CNCM I-2342 / ORS 2060).